The following is a 473-amino-acid chain: Zinc finger and SCAN domain-containing protein 21 (473 aa).

Lys27 is covalently cross-linked (Glycyl lysine isopeptide (Lys-Gly) (interchain with G-Cter in SUMO2)). An SCAN box domain is found at 45-127; it reads RQRFRQFGYH…TLLEDLEREL (83 aa). A disordered region spans residues 127–171; it reads LDEPGHQVSTPPNEQKPVWEKISSSGTAKESPSSMQPQPLETSHN. The span at 148-171 shows a compositional bias: polar residues; sequence ISSSGTAKESPSSMQPQPLETSHN. Residues Lys221 and Lys232 each participate in a glycyl lysine isopeptide (Lys-Gly) (interchain with G-Cter in SUMO2) cross-link. The segment at 244–272 is disordered; sequence LENEKGTKPPLQEAGSKKGRESVPTKPTP. Positions 258–272 are enriched in basic and acidic residues; the sequence is GSKKGRESVPTKPTP. C2H2-type zinc fingers lie at residues 277 to 299, 305 to 327, 333 to 354, 360 to 382, 388 to 410, 416 to 438, and 444 to 466; these read YICAECGKAFSNSSNLTKHRRTH, YVCTKCGKAFSHSSNLTLHYRTH, YDCKCGKAFGQSSDLLKHQRMH, YQCKDCGKAFSGKGSLIRHYRIH, YQCNECGKSFSQHAGLSSHQRLH, YKCKECGKAFNHSSNFNKHHRIH, and YWCHHCGKTFCSKSNLSKHQRVH. Lys349 participates in a covalent cross-link: Glycyl lysine isopeptide (Lys-Gly) (interchain with G-Cter in SUMO2).

This sequence belongs to the krueppel C2H2-type zinc-finger protein family.

The protein resides in the nucleus. Its function is as follows. Strong transcriptional activator. Plays an important role in spermatogenesis; essential for the progression of meiotic prophase I in spermatocytes. In Gorilla gorilla gorilla (Western lowland gorilla), this protein is Zinc finger and SCAN domain-containing protein 21 (ZSCAN21).